Here is a 1079-residue protein sequence, read N- to C-terminus: Zn(2)-C6 fungal-type transcription factor FTF1a (1079 aa).

A DNA-binding region (zn(2)-C6 fungal-type) is located at residues 177–204 (CIACRRKKIRCSGEKPACKQCLHSCIPC).

It is found in the nucleus. In terms of biological role, zn(2)-C6 fungal-type transcription factor that has a role in the establishment of the fungus within the plant and/or the progress of the disease. Regulates the expression of virulence factors such as SIX1 and SIX6. In Fusarium oxysporum f. sp. lycopersici (strain 4287 / CBS 123668 / FGSC 9935 / NRRL 34936) (Fusarium vascular wilt of tomato), this protein is Zn(2)-C6 fungal-type transcription factor FTF1a.